The chain runs to 539 residues: GMP synthase [glutamine-hydrolyzing] (539 aa).

Residues 4 to 202 (KILILDFGSQ…VLQIAGCKPD (199 aa)) form the Glutamine amidotransferase type-1 domain. C81 acts as the Nucleophile in catalysis. Active-site residues include H176 and E178. A GMPS ATP-PPase domain is found at 203–395 (WVMRDHIEEA…LGLPPEMVYR (193 aa)). An ATP-binding site is contributed by 230-236 (SGGVDSS).

Homodimer.

The enzyme catalyses XMP + L-glutamine + ATP + H2O = GMP + L-glutamate + AMP + diphosphate + 2 H(+). It functions in the pathway purine metabolism; GMP biosynthesis; GMP from XMP (L-Gln route): step 1/1. Its function is as follows. Catalyzes the synthesis of GMP from XMP. This Cupriavidus taiwanensis (strain DSM 17343 / BCRC 17206 / CCUG 44338 / CIP 107171 / LMG 19424 / R1) (Ralstonia taiwanensis (strain LMG 19424)) protein is GMP synthase [glutamine-hydrolyzing].